A 65-amino-acid chain; its full sequence is Temporin-LK1 (65 aa).

The signal sequence occupies residues 1 to 22 (MFTMKKSLLLLFFLGAINLPLC). Residues 23–44 (QEERNAEEERRDGDDEGSVEVQ) constitute a propeptide that is removed on maturation. The residue at position 63 (Phe-63) is a Phenylalanine amide.

Expressed by the skin glands.

It is found in the secreted. In terms of biological role, has antimicrobial activity against Gram-positive bacteria S.aureus ATCC 2592 (MIC=2.5 uM), S.aureus ATCC 43300 (MIC=2.5 uM) and B.subtilis (MIC=15.0 uM), against Gram-negative bacteria E.coli ML-35P (MIC=30.0 uM), P.aeruginosa PA01 (MIC=2.5 uM) and P.aeruginosa ATCC 27853 (MIC=2.5 uM) and against fungus C.albicans ATCC 2002 (MIC=5.0 uM). The sequence is that of Temporin-LK1 from Limnonectes kuhlii (Kuhl's Creek frog).